A 255-amino-acid chain; its full sequence is Flap endonuclease Xni (255 aa).

Asp-105 provides a ligand contact to Mg(2+). The 93-residue stretch at 162–254 (EHKQFIDYLA…LKQFRLPKAN (93 aa)) folds into the 5'-3' exonuclease domain. K(+) is bound by residues Leu-172, Ala-173, Pro-181, Val-183, and Ile-186. The tract at residues 185-190 (GIGPKS) is interaction with DNA.

It belongs to the Xni family. Mg(2+) is required as a cofactor. Requires K(+) as cofactor.

In terms of biological role, has flap endonuclease activity. During DNA replication, flap endonucleases cleave the 5'-overhanging flap structure that is generated by displacement synthesis when DNA polymerase encounters the 5'-end of a downstream Okazaki fragment. This Shewanella piezotolerans (strain WP3 / JCM 13877) protein is Flap endonuclease Xni.